Here is a 116-residue protein sequence, read N- to C-terminus: Peptidyl-tRNA hydrolase (116 aa).

The protein belongs to the PTH2 family.

It localises to the cytoplasm. The enzyme catalyses an N-acyl-L-alpha-aminoacyl-tRNA + H2O = an N-acyl-L-amino acid + a tRNA + H(+). Its function is as follows. The natural substrate for this enzyme may be peptidyl-tRNAs which drop off the ribosome during protein synthesis. The sequence is that of Peptidyl-tRNA hydrolase from Methanococcus vannielii (strain ATCC 35089 / DSM 1224 / JCM 13029 / OCM 148 / SB).